The following is a 99-amino-acid chain: Large ribosomal subunit protein uL23 (99 aa).

This sequence belongs to the universal ribosomal protein uL23 family. Part of the 50S ribosomal subunit. Contacts protein L29, and trigger factor when it is bound to the ribosome.

In terms of biological role, one of the early assembly proteins it binds 23S rRNA. One of the proteins that surrounds the polypeptide exit tunnel on the outside of the ribosome. Forms the main docking site for trigger factor binding to the ribosome. This is Large ribosomal subunit protein uL23 from Francisella tularensis subsp. holarctica (strain OSU18).